The primary structure comprises 451 residues: DNA polymerase IV (451 aa).

Positions 5-187 constitute a UmuC domain; sequence VIHVDMDAFF…LPVGRLWGVG (183 aa). Mg(2+) is bound by residues aspartate 9 and aspartate 104. Residue glutamate 105 is part of the active site.

It belongs to the DNA polymerase type-Y family. As to quaternary structure, monomer. The cofactor is Mg(2+).

It localises to the cytoplasm. The catalysed reaction is DNA(n) + a 2'-deoxyribonucleoside 5'-triphosphate = DNA(n+1) + diphosphate. Functionally, poorly processive, error-prone DNA polymerase involved in untargeted mutagenesis. Copies undamaged DNA at stalled replication forks, which arise in vivo from mismatched or misaligned primer ends. These misaligned primers can be extended by PolIV. Exhibits no 3'-5' exonuclease (proofreading) activity. May be involved in translesional synthesis, in conjunction with the beta clamp from PolIII. The sequence is that of DNA polymerase IV from Corynebacterium diphtheriae (strain ATCC 700971 / NCTC 13129 / Biotype gravis).